The chain runs to 764 residues: uncharacterized protein (764 aa).

The Lumenal portion of the chain corresponds to 1-646 (MKEENGFAGF…LTKLYTFPFT (646 aa)). The interval 22–173 (LNDTAPTKSQ…SAITAPSRKV (152 aa)) is disordered. The N-linked (GlcNAc...) asparagine glycan is linked to N23. Polar residues-rich tracts occupy residues 25-41 (TAPTKSQSLKNGVNNEG) and 61-82 (SEASSHSTLGQQQARDGRQSPS). Residue S80 is modified to Phosphoserine. A compositionally biased stretch (acidic residues) spans 98-113 (ENQENEADEAENEETS). An N-linked (GlcNAc...) asparagine glycan is attached at N118. Residues 118-145 (NHTENTEEIAEESRPLERTHSGSNHHEA) are compositionally biased toward basic and acidic residues. A compositionally biased stretch (polar residues) spans 158–173 (NTLSQGSAITAPSRKV). The GRAM domain maps to 197–264 (RDFHRIFKVL…TEIVSVEKKS (68 aa)). N-linked (GlcNAc...) asparagine glycans are attached at residues N240 and N330. Positions 320–406 (ASGNHHSGSS…DGNSVKKMNE (87 aa)) are disordered. Residues 321–330 (SGNHHSGSSN) are compositionally biased toward low complexity. A compositionally biased stretch (polar residues) spans 331-340 (QSINADSSAG). The span at 352–371 (ANDESSEDDDEDNNTDEANE) shows a compositional bias: acidic residues. Residues N364 and N376 are each glycosylated (N-linked (GlcNAc...) asparagine). Residues 389–399 (HSDNVVLSDGN) are compositionally biased toward polar residues. Residues 432-598 (LAHVLCSDVV…AFENYKVSPK (167 aa)) form the VASt domain. N-linked (GlcNAc...) asparagine glycans are attached at residues N442 and N554. The segment covering 598 to 613 (KGRRKKITKHTKKKNK) has biased composition (basic residues). The disordered stretch occupies residues 598–626 (KGRRKKITKHTKKKNKHASETSVAPEKVD). N627 is a glycosylation site (N-linked (GlcNAc...) asparagine). The chain crosses the membrane as a helical span at residues 647–667 (IITWLMHPTHLLLVVMFSMLV). Residues 668–764 (LQWWYMQQIL…LRKLEASGYI (97 aa)) lie on the Cytoplasmic side of the membrane.

Belongs to the YSP2 family.

It localises to the membrane. This is an uncharacterized protein from Schizosaccharomyces pombe (strain 972 / ATCC 24843) (Fission yeast).